A 165-amino-acid chain; its full sequence is Putative defense protein Hdd11 (165 aa).

The signal sequence occupies residues 1–17 (MWATYVFIAVSLACANG). Residues 18-165 (YSSGAPESVC…VESGPVKVIS (148 aa)) form the Reelin domain. Cys-27 and Cys-104 are oxidised to a cystine.

The protein belongs to the insect defense protein family.

Its subcellular location is the secreted. As this protein is expressed upon bacterial infection, it may have antimicrobial activity. This is Putative defense protein Hdd11 from Hyphantria cunea (Fall webworm moth).